We begin with the raw amino-acid sequence, 338 residues long: Envelope glycoprotein K (338 aa).

The first 30 residues, Met-1–Gly-30, serve as a signal peptide directing secretion. Residues Ala-31 to Thr-121 are Extracellular-facing. The segment at Ala-31 to Thr-121 is involved in fusion. N-linked (GlcNAc...) asparagine; by host glycosylation is found at Asn-48 and Asn-58. The helical transmembrane segment at Arg-122–His-140 threads the bilayer. Residues Gln-141 to Pro-212 lie on the Cytoplasmic side of the membrane. The chain crosses the membrane as a helical span at residues Ala-213–Val-233. Residues Gly-234–Cys-243 are Extracellular-facing. Residues Ala-244–Leu-264 traverse the membrane as a helical segment. At Thr-265 to Ser-301 the chain is on the cytoplasmic side. An interaction with UL20 region spans residues Thr-265 to Ser-301. The helical transmembrane segment at Ile-302–Leu-322 threads the bilayer. Residues Val-323 to Val-338 are Extracellular-facing.

Belongs to the alphaherpesvirinae glycoprotein K family. As to quaternary structure, interacts (via UL20 interaction region) with protein UL20 (via N-terminus); this interaction probably plays a role in the coordinate transport of protein UL20 and gK to the trans-Golgi network (TGN), and is required for the cell surface expression of gK. In terms of processing, N-glycosylated.

The protein localises to the host cell membrane. The protein resides in the host endosome membrane. Its subcellular location is the host Golgi apparatus membrane. Functionally, glycoprotein that probably modulates membrane fusion events during secondary envelopment of cytoplasmic capsids that bud into specific trans-Golgi network (TGN)-derived membranes. Also plays a role, together with gB, in virus-induced cell-to-cell fusion (syncytia formation). Seems to block fusion of virions with infected-cell membranes. This chain is Envelope glycoprotein K (gK), found in Homo sapiens (Human).